The chain runs to 199 residues: N-(5'-phosphoribosyl)anthranilate isomerase (199 aa).

Belongs to the TrpF family.

It carries out the reaction N-(5-phospho-beta-D-ribosyl)anthranilate = 1-(2-carboxyphenylamino)-1-deoxy-D-ribulose 5-phosphate. It functions in the pathway amino-acid biosynthesis; L-tryptophan biosynthesis; L-tryptophan from chorismate: step 3/5. The polypeptide is N-(5'-phosphoribosyl)anthranilate isomerase (Streptococcus pneumoniae (strain ATCC BAA-255 / R6)).